A 368-amino-acid polypeptide reads, in one-letter code: Cyclin-dependent kinase 2 (368 aa).

In terms of domain architecture, Protein kinase spans 45–330 (FCSLRRIGEG…AKGALSHRYF (286 aa)). ATP is bound by residues 51 to 59 (IGEGTYGVV) and lysine 74. Aspartate 170 functions as the Proton acceptor in the catalytic mechanism. Asparagine 175 and aspartate 188 together coordinate Mg(2+).

It belongs to the protein kinase superfamily. CMGC Ser/Thr protein kinase family. CDC2/CDKX subfamily. In terms of assembly, interacts with cye-1; the interaction likely regulates cdk-2 activity and is probably required for gld-1 phosphorylation. The cofactor is Mg(2+).

It catalyses the reaction L-seryl-[protein] + ATP = O-phospho-L-seryl-[protein] + ADP + H(+). The catalysed reaction is L-threonyl-[protein] + ATP = O-phospho-L-threonyl-[protein] + ADP + H(+). Its function is as follows. Serine/threonine-protein kinase which, in association with cye-1, regulates proliferation, quiescent state and cell fate during the development of several cell lineages. In the embryo, initiates the establishment of cell polarity through the recruitment of the centrosomal proteins spd-2 and spd-5 during prophase. Phosphorylation and inhibition of the translational repressor gld-1 by the cdk-2/cye-1 complex regulates the pool of germline stem cells and the size of the mitotic zone in the gonads by preventing entry into meiosis. This chain is Cyclin-dependent kinase 2, found in Caenorhabditis elegans.